We begin with the raw amino-acid sequence, 199 residues long: MTEKEKMLAEKWYDANFDQDLINERARAKDICFELNHTKPSDTNKRKELIDQLFQTTTDNVSISIPFDTDYGWNVKLGKNVYVNTNCYFMDGGQITIGDNVFIGPNCGFYTATHPLNFYHRNEGYEKAGPIHIGSNTWFGGHVAVLPGVTIGEGSVIGAGSVVTKDIPPHSLAVGNPCKVVRKIDNDLPSETLNDETIK.

The protein belongs to the transferase hexapeptide repeat family.

This Staphylococcus aureus (strain Mu50 / ATCC 700699) protein is Putative acetyltransferase SAV2555.